A 180-amino-acid chain; its full sequence is ADP-ribosylation factor 4 (180 aa).

Glycine 2 carries N-myristoyl glycine lipidation. Residues 24 to 31 (GLDAAGKT), 67 to 71 (DVGGQ), and 126 to 129 (NKQD) each bind GTP. Position 147 is a phosphoserine (serine 147).

It belongs to the small GTPase superfamily. Arf family. As to quaternary structure, forms a complex containing RAB11A, ASAP1, RAB3IP, RAP11FIP3 and ARF4; the complex promotes preciliary trafficking; the complex binds to RHO in photoreceptor cells and promotes RHO ciliary transport.

The protein localises to the golgi apparatus. It localises to the membrane. GTP-binding protein that functions as an allosteric activator of the cholera toxin catalytic subunit, an ADP-ribosyltransferase. Involved in protein trafficking; may modulate vesicle budding and uncoating within the Golgi apparatus. Part of the ciliary targeting complex containing Rab11, ASAP1, Rabin8/RAB3IP, RAB11FIP3 and ARF4, which direct preciliary vesicle trafficking to mother centriole and ciliogenesis initiation. The sequence is that of ADP-ribosylation factor 4 (ARF4) from Bos taurus (Bovine).